The chain runs to 483 residues: Altronate oxidoreductase (483 aa).

18-29 is an NAD(+) binding site; sequence IIQFGEGNFLRA.

It belongs to the mannitol dehydrogenase family. UxaB subfamily.

The enzyme catalyses D-altronate + NAD(+) = keto-D-tagaturonate + NADH + H(+). It participates in carbohydrate metabolism; pentose and glucuronate interconversion. This chain is Altronate oxidoreductase, found in Escherichia coli (strain 55989 / EAEC).